Consider the following 188-residue polypeptide: Der GTPase-activating protein YihI (188 aa).

2 disordered regions span residues methionine 1–proline 80 and aspartate 162–phenylalanine 188. Residues threonine 27 to aspartate 37 are compositionally biased toward basic and acidic residues. Polar residues predominate over residues asparagine 47–glycine 57.

It belongs to the YihI family. Interacts with Der.

A GTPase-activating protein (GAP) that modifies Der/EngA GTPase function. May play a role in ribosome biogenesis. The polypeptide is Der GTPase-activating protein YihI (Yersinia pseudotuberculosis serotype O:1b (strain IP 31758)).